Reading from the N-terminus, the 392-residue chain is Ameloblastin (392 aa).

A signal peptide spans 1 to 26 (MPALKIPLFKMKDMILILCLLKMSSA). Pro-37 carries the post-translational modification Hydroxyproline. Ser-43 bears the Phosphoserine mark. Disordered regions lie at residues 86 to 109 (FPWM…PGQK), 247 to 280 (TLEF…LADP), and 349 to 392 (TTLG…FQEP). Residues 97–109 (QQPSLQPQQPGQK) show a composition bias toward low complexity. Polar residues predominate over residues 359 to 381 (VDSTATPDTQHTLMPRNKAQQPQ). The segment covering 382–392 (IKHDAWHFQEP) has biased composition (basic and acidic residues).

Belongs to the ameloblastin family.

It is found in the secreted. The protein localises to the extracellular space. It localises to the extracellular matrix. In terms of biological role, involved in the mineralization and structural organization of enamel. The polypeptide is Ameloblastin (AMBN) (Bos taurus (Bovine)).